The following is a 47-amino-acid chain: Delta-actitoxin-Ael1a (47 aa).

Cystine bridges form between Cys4–Cys44, Cys6–Cys34, and Cys27–Cys45.

The protein belongs to the sea anemone sodium channel inhibitory toxin family. Type I subfamily. Expressed in ectodermal glands. Not expressed in nematocytes.

The protein localises to the secreted. Functionally, binds specifically to voltage-gated sodium channels (Nav), thereby delaying their inactivation during signal transduction. It strongly stimulates mammalian cardiac muscle contraction. Paralyzes the shore crab (C.maenas) by tetanic contractions after intramuscular injection. In Anthopleura elegantissima (Green aggregating anemone), this protein is Delta-actitoxin-Ael1a.